The sequence spans 779 residues: Putative helicase V13 (779 aa).

The SF3 helicase domain maps to Asp-477–Lys-642. Gly-504–Ser-511 serves as a coordination point for ATP.

This chain is Putative helicase V13, found in Acanthamoeba polyphaga (Amoeba).